A 470-amino-acid polypeptide reads, in one-letter code: MNPNQKIICISATGMTLSVVSLLIGIANLGLNIGLHYKVGDTPGVNVPNENGTNSTTTIINNNTQNNFTNITNIIQTKTEEKTFLNLTKPLCEVNSWHILSKDNAIRIGEDAHILVTREPYLSCGPQGCRMFALSQGTTLRGRHANGTIHDRSPYRALISWEMGQAPSPYNTRVECIGWSSTSCHDGKSRMSICMSGPNNNASAVVWYGGRPATEIPSWAGNILRTQESECVCHNGVCPVVMTDGPANNRAATKIIYFKEGKIQKIEELTGSAQHIEECSCYGAKSVIKCICRDNWKGANRPVITIDPEMMTHTSKYLCSKILTDTSRPNDPIDGDCDAPITGGSPDPGVKGFAFLDGDNSWLGRTISKDSRSGYEMLKVPNAETSTQSGPVSHQVIVNNQNWSGYSGAFIDYWSNKECFNPCFYVELIRGRPKESSVLWTSNSIVALCGSKERLGSWSWHDGAEIIYFK.

Residues 1–6 are Intravirion-facing; that stretch reads MNPNQK. The chain crosses the membrane as a helical span at residues 7–27; the sequence is IICISATGMTLSVVSLLIGIA. The involved in apical transport and lipid raft association stretch occupies residues 11–33; that stretch reads SATGMTLSVVSLLIGIANLGLNI. Residues 28–470 lie on the Virion surface side of the membrane; sequence NLGLNIGLHY…HDGAEIIYFK (443 aa). The tract at residues 36–88 is hypervariable stalk region; that stretch reads HYKVGDTPGVNVPNENGTNSTTTIINNNTQNNFTNITNIIQTKTEEKTFLNLT. 6 N-linked (GlcNAc...) asparagine; by host glycosylation sites follow: Asn-51, Asn-54, Asn-62, Asn-67, Asn-70, and Asn-86. The segment at 91 to 470 is head of neuraminidase; that stretch reads LCEVNSWHIL…HDGAEIIYFK (380 aa). Cystine bridges form between Cys-92-Cys-419, Cys-124-Cys-129, Cys-184-Cys-231, Cys-233-Cys-238, Cys-279-Cys-292, Cys-281-Cys-290, Cys-319-Cys-337, and Cys-423-Cys-449. Substrate is bound at residue Arg-118. A glycan (N-linked (GlcNAc...) asparagine; by host) is linked at Asn-146. Asp-151 acts as the Proton donor/acceptor in catalysis. Arg-152 provides a ligand contact to substrate. The N-linked (GlcNAc...) asparagine; by host glycan is linked to Asn-201. Substrate is bound at residue 277 to 278; sequence EE. Arg-293 contributes to the substrate binding site. Ca(2+)-binding residues include Asp-294, Gly-298, and Asp-325. Residue Arg-372 coordinates substrate. Asn-402 is a glycosylation site (N-linked (GlcNAc...) asparagine; by host). The active-site Nucleophile is the Tyr-406.

The protein belongs to the glycosyl hydrolase 34 family. Homotetramer. Ca(2+) serves as cofactor. In terms of processing, N-glycosylated.

The protein resides in the virion membrane. It localises to the host apical cell membrane. The enzyme catalyses Hydrolysis of alpha-(2-&gt;3)-, alpha-(2-&gt;6)-, alpha-(2-&gt;8)- glycosidic linkages of terminal sialic acid residues in oligosaccharides, glycoproteins, glycolipids, colominic acid and synthetic substrates.. With respect to regulation, inhibited by the neuraminidase inhibitors zanamivir (Relenza) and oseltamivir (Tamiflu). These drugs interfere with the release of progeny virus from infected cells and are effective against all influenza strains. Resistance to neuraminidase inhibitors is quite rare. Its function is as follows. Catalyzes the removal of terminal sialic acid residues from viral and cellular glycoconjugates. Cleaves off the terminal sialic acids on the glycosylated HA during virus budding to facilitate virus release. Additionally helps virus spread through the circulation by further removing sialic acids from the cell surface. These cleavages prevent self-aggregation and ensure the efficient spread of the progeny virus from cell to cell. Otherwise, infection would be limited to one round of replication. Described as a receptor-destroying enzyme because it cleaves a terminal sialic acid from the cellular receptors. May facilitate viral invasion of the upper airways by cleaving the sialic acid moieties on the mucin of the airway epithelial cells. Likely to plays a role in the budding process through its association with lipid rafts during intracellular transport. May additionally display a raft-association independent effect on budding. Plays a role in the determination of host range restriction on replication and virulence. Sialidase activity in late endosome/lysosome traffic seems to enhance virus replication. The polypeptide is Neuraminidase (Aves (Pig)).